Here is a 298-residue protein sequence, read N- to C-terminus: MTEVVTALSEQARAKVNLTLRVIGRRVDGYHELESVVVFADCADGLTLAPGQDLSLDASGPRVTECGDNADNLVIKAARLLAELVPGLKTGGFSLDKQLPIAAGIGGGSADAAAALRLLARSNGIALDDPRLMEAAKRTGADVPVCVASASCIMGGIGEKLTPLPLPRLSAVMVNPRVGVPTKDVFAALGLKNGQLNVGVTDVVAAPAWPDRDAPLGEWIAALSAGVNDLEAPAKQVQPVVGEVIALLAACDGALLARMSGSGATCFAIFGSDAEAKAAAQAIQRAHPNWWVHAGTLS.

The active site involves lysine 15. Position 100–110 (100–110 (PIAAGIGGGSA)) interacts with ATP. Residue aspartate 142 is part of the active site.

The protein belongs to the GHMP kinase family. IspE subfamily.

The catalysed reaction is 4-CDP-2-C-methyl-D-erythritol + ATP = 4-CDP-2-C-methyl-D-erythritol 2-phosphate + ADP + H(+). The protein operates within isoprenoid biosynthesis; isopentenyl diphosphate biosynthesis via DXP pathway; isopentenyl diphosphate from 1-deoxy-D-xylulose 5-phosphate: step 3/6. In terms of biological role, catalyzes the phosphorylation of the position 2 hydroxy group of 4-diphosphocytidyl-2C-methyl-D-erythritol. The protein is 4-diphosphocytidyl-2-C-methyl-D-erythritol kinase of Rhodopseudomonas palustris (strain BisA53).